We begin with the raw amino-acid sequence, 133 residues long: Homeobox protein HD-5 (133 aa).

The homeobox DNA-binding region spans serine 34–arginine 93. Residues arginine 86–glutamate 109 form a disordered region.

The protein resides in the nucleus. This is Homeobox protein HD-5 (HD-5) from Encephalitozoon cuniculi (strain GB-M1) (Microsporidian parasite).